We begin with the raw amino-acid sequence, 123 residues long: Fluoride-specific ion channel FluC (123 aa).

4 consecutive transmembrane segments (helical) span residues 1–21 (MLEI…RYLM), 32–52 (ILSL…GLVI), 64–84 (IGLL…SFSY), and 99–119 (FGYT…GIYL). Residues Gly74 and Thr77 each contribute to the Na(+) site.

The protein belongs to the fluoride channel Fluc/FEX (TC 1.A.43) family.

It is found in the cell inner membrane. It carries out the reaction fluoride(in) = fluoride(out). Na(+) is not transported, but it plays an essential structural role and its presence is essential for fluoride channel function. Its function is as follows. Fluoride-specific ion channel. Important for reducing fluoride concentration in the cell, thus reducing its toxicity. This is Fluoride-specific ion channel FluC from Gloeothece citriformis (strain PCC 7424) (Cyanothece sp. (strain PCC 7424)).